The sequence spans 336 residues: Glyceraldehyde-3-phosphate dehydrogenase, chromosomal (336 aa).

Residues 12–13, aspartate 37, arginine 81, and serine 123 contribute to the NAD(+) site; that span reads RI. D-glyceraldehyde 3-phosphate-binding positions include 154–156 and threonine 185; that span reads SCT. Cysteine 155 (nucleophile) is an active-site residue. Asparagine 186 provides a ligand contact to NAD(+). D-glyceraldehyde 3-phosphate contacts are provided by residues arginine 200, 213 to 214, and arginine 236; that span reads TG. Residue asparagine 317 participates in NAD(+) binding.

This sequence belongs to the glyceraldehyde-3-phosphate dehydrogenase family. Homotetramer.

It catalyses the reaction D-glyceraldehyde 3-phosphate + phosphate + NAD(+) = (2R)-3-phospho-glyceroyl phosphate + NADH + H(+). It functions in the pathway carbohydrate biosynthesis; Calvin cycle. In terms of biological role, could be involved in carbon fixation as a component of the Calvin cycle. Catalyzes the oxidative phosphorylation of glyceraldehyde 3-phosphate (G3P) to 1,3-bisphosphoglycerate (BPG) using the cofactor NAD. The first reaction step involves the formation of a hemiacetal intermediate between G3P and a cysteine residue, and this hemiacetal intermediate is then oxidized to a thioester, with concomitant reduction of NAD to NADH. The reduced NADH is then exchanged with the second NAD, and the thioester is attacked by a nucleophilic inorganic phosphate to produce BPG. The chain is Glyceraldehyde-3-phosphate dehydrogenase, chromosomal (cbbGC) from Cupriavidus necator (strain ATCC 17699 / DSM 428 / KCTC 22496 / NCIMB 10442 / H16 / Stanier 337) (Ralstonia eutropha).